A 273-amino-acid chain; its full sequence is Glutamate 5-kinase (273 aa).

Residue Lys-15 coordinates ATP. Substrate is bound by residues Ser-55, Asp-142, and Asn-158. Residues 178-179 (SD) and 220-226 (TGGMLSK) each bind ATP.

This sequence belongs to the glutamate 5-kinase family.

The protein localises to the cytoplasm. The enzyme catalyses L-glutamate + ATP = L-glutamyl 5-phosphate + ADP. Its pathway is amino-acid biosynthesis; L-proline biosynthesis; L-glutamate 5-semialdehyde from L-glutamate: step 1/2. In terms of biological role, catalyzes the transfer of a phosphate group to glutamate to form L-glutamate 5-phosphate. In Streptococcus pyogenes serotype M18 (strain MGAS8232), this protein is Glutamate 5-kinase.